Reading from the N-terminus, the 97-residue chain is Gibberellin-regulated protein 5 (97 aa).

The first 27 residues, 1 to 27 (MANCIRRNALFFLTLLFLLSVSNLVQA), serve as a signal peptide directing secretion.

This sequence belongs to the GASA family. Six disulfide bonds may be present. In terms of tissue distribution, expressed in roots, root hairs, vasculature of cotyledons and hypocotyls, shoot apex, leaf veins, stems, flower receptacles, pollen, filaments, anthers and siliques.

The protein resides in the secreted. It is found in the cell wall. Its subcellular location is the extracellular space. The protein localises to the extracellular matrix. Gibberellin-regulated protein that acts as a negative regulator of gibberellin-induced flowering and stem growth. May inhibit flowering and inflorescence growth via a pathway involving GAI and by enhancing FLC expression and repressing FT and LFY. Acts as a negative regulator in thermotolerance by resogulating both salicylic acid (SA) signaling and heat shock-protein accumulation. This chain is Gibberellin-regulated protein 5 (GASA5), found in Arabidopsis thaliana (Mouse-ear cress).